A 288-amino-acid chain; its full sequence is MNNLSFSELCCLFCCPPCPGKIASKLAFLPPDPTYTLICDESGSRWTLHLSERADWQYSSREKDAIECFMTRTSRGNRIACMFVRCSPNAKYTLLFSHGNAVDLGQMSSFYIGLGSRINCNIFSYDYSGYGSSSGKPSEKNLYADIDAAWIALRTRYGIRPEHVIIYGQSIGTVPSVDLAARYESAAVILHSPLTSGMRVAFPDTKKTYCFDAFPNIDKISKITSPVLIIHGTEDEVIDFSHGLALFERCQRPVEPLWVEGAGHNDVELYGQYLERLKQFVTQELVNL.

Catalysis depends on charge relay system residues S170, D235, and H264.

This sequence belongs to the AB hydrolase superfamily. ABHD17 family. Post-translationally, palmitoylated on cysteine residues located in a cysteine cluster at the N-terminus which promotes membrane localization.

Its subcellular location is the cell membrane. The protein localises to the recycling endosome membrane. It is found in the cell projection. The protein resides in the dendritic spine. It localises to the postsynaptic density membrane. It catalyses the reaction S-hexadecanoyl-L-cysteinyl-[protein] + H2O = L-cysteinyl-[protein] + hexadecanoate + H(+). Hydrolyzes fatty acids from S-acylated cysteine residues in proteins. This is Alpha/beta hydrolase domain-containing protein 17B from Xenopus tropicalis (Western clawed frog).